The primary structure comprises 365 residues: Pectate trisaccharide-lyase (365 aa).

Positions 1–25 are cleaved as a signal peptide; sequence MRFSRVVSLVLLLVFTAVLTGAVKA. Positions 142, 164, and 168 each coordinate Ca(2+). The PbH1 1 repeat unit spans residues 149–171; it reads SHHIWIDHCTFVNGNDGAVDIKK. The active site involves Arg222. The stretch at 261 to 287 is one PbH1 2 repeat; sequence GAKVHVEGNYFMGYGAVMAEAGIAFLP.

It belongs to the polysaccharide lyase 1 family. In terms of assembly, homotetramer. It depends on Ca(2+) as a cofactor.

Its subcellular location is the secreted. The catalysed reaction is eliminative cleavage of unsaturated trigalacturonate as the major product from the reducing end of polygalacturonic acid/pectate.. In terms of biological role, cleaves unsaturated trigalacturonate from pectin. Activity is highest towards polygalacturonic acid, activity on methylated pectins decreases with an increasing degree of methylation. This is Pectate trisaccharide-lyase from Thermotoga sp. (strain RQ2).